Reading from the N-terminus, the 97-residue chain is uncharacterized protein (97 aa).

Residues 38-97 form a disordered region; sequence TSPPDWNKFSGKVSINEPTTSKSKSKSTSTSTSTSTSTSTSTSTSSSTSSTSSTTSSINK. Residues 56–97 show a composition bias toward low complexity; the sequence is TTSKSKSKSTSTSTSTSTSTSTSTSTSSSTSSTSSTTSSINK.

This is an uncharacterized protein from Dictyostelium discoideum (Social amoeba).